The primary structure comprises 439 residues: Dolichyl-diphosphooligosaccharide--protein glycosyltransferase 48 kDa subunit (439 aa).

Residues 1–26 (MEPSTAARAWALFWLLPPLLGAVCAS) form the signal peptide. Topologically, residues 27 to 410 (GPRTLVLLDN…YERFIPSAYP (384 aa)) are lumenal. A helical membrane pass occupies residues 411–430 (YYASAFSMMLGLFIFSIVFL). Topologically, residues 431-439 (HMKEKEKSD) are cytoplasmic.

Belongs to the DDOST 48 kDa subunit family. In terms of assembly, component of the oligosaccharyltransferase (OST) complex. OST exists in two different complex forms which contain common core subunits RPN1, RPN2, OST48, OST4, DAD1 and TMEM258, either STT3A or STT3B as catalytic subunits, and form-specific accessory subunits. STT3A complex assembly occurs through the formation of 3 subcomplexes. Subcomplex 1 contains RPN1 and TMEM258, subcomplex 2 contains the STT3A-specific subunits STT3A, DC2/OSTC, and KCP2 as well as the core subunit OST4, and subcomplex 3 contains RPN2, DAD1, and OST48. The STT3A complex can form stable complexes with the Sec61 complex or with both the Sec61 and TRAP complexes. Interacts with SMIM22.

The protein resides in the endoplasmic reticulum membrane. It functions in the pathway protein modification; protein glycosylation. In terms of biological role, subunit of the oligosaccharyl transferase (OST) complex that catalyzes the initial transfer of a defined glycan (Glc(3)Man(9)GlcNAc(2) in eukaryotes) from the lipid carrier dolichol-pyrophosphate to an asparagine residue within an Asn-X-Ser/Thr consensus motif in nascent polypeptide chains, the first step in protein N-glycosylation. N-glycosylation occurs cotranslationally and the complex associates with the Sec61 complex at the channel-forming translocon complex that mediates protein translocation across the endoplasmic reticulum (ER). All subunits are required for a maximal enzyme activity. Required for the assembly of both SST3A- and SS3B-containing OST complexes. In Pongo abelii (Sumatran orangutan), this protein is Dolichyl-diphosphooligosaccharide--protein glycosyltransferase 48 kDa subunit.